The chain runs to 285 residues: Polyamine aminopropyltransferase (285 aa).

In terms of domain architecture, PABS spans 5-241; sequence DNWYIEHFQP…GWWSVTMASK (237 aa). Residue Gln35 participates in S-methyl-5'-thioadenosine binding. His66 and Asp90 together coordinate spermidine. Residues Asp110 and 141–142 each bind S-methyl-5'-thioadenosine; that span reads DG. The active-site Proton acceptor is the Asp160. 160-163 is a binding site for spermidine; it reads DSTD. Residue Pro167 participates in S-methyl-5'-thioadenosine binding.

This sequence belongs to the spermidine/spermine synthase family. Homodimer or homotetramer.

Its subcellular location is the cytoplasm. It carries out the reaction S-adenosyl 3-(methylsulfanyl)propylamine + putrescine = S-methyl-5'-thioadenosine + spermidine + H(+). Its pathway is amine and polyamine biosynthesis; spermidine biosynthesis; spermidine from putrescine: step 1/1. Functionally, catalyzes the irreversible transfer of a propylamine group from the amino donor S-adenosylmethioninamine (decarboxy-AdoMet) to putrescine (1,4-diaminobutane) to yield spermidine. The polypeptide is Polyamine aminopropyltransferase (Xanthomonas campestris pv. campestris (strain 8004)).